We begin with the raw amino-acid sequence, 202 residues long: uncharacterized protein (202 aa).

A Smr domain is found at 116 to 196 (LDLHGMTCSE…GKGTTWVLLK (81 aa)).

This is an uncharacterized protein from Treponema pallidum (strain Nichols).